The chain runs to 138 residues: Large ribosomal subunit protein bL17 (138 aa).

This sequence belongs to the bacterial ribosomal protein bL17 family. As to quaternary structure, part of the 50S ribosomal subunit. Contacts protein L32.

The sequence is that of Large ribosomal subunit protein bL17 from Granulibacter bethesdensis (strain ATCC BAA-1260 / CGDNIH1).